Here is a 109-residue protein sequence, read N- to C-terminus: N-alpha-acetyltransferase 38, NatC auxiliary subunit (109 aa).

The 79-residue stretch at 23–101 (LARCKLENLL…VVSIEVETES (79 aa)) folds into the Sm domain.

Belongs to the snRNP Sm proteins family. As to quaternary structure, component of the N-terminal acetyltransferase C (NatC) complex.

It localises to the cytoplasm. The protein localises to the nucleus. In terms of biological role, auxillary component of the N-terminal acetyltransferase C (NatC) complex which catalyzes acetylation of N-terminal methionine residues. N-terminal acetylation protects proteins from ubiquitination and degradation by the N-end rule pathway. This Danio rerio (Zebrafish) protein is N-alpha-acetyltransferase 38, NatC auxiliary subunit (naa38).